Reading from the N-terminus, the 752-residue chain is Complement C2 (752 aa).

The first 20 residues, 1–20 (MGPLMVLFCLLFVYTGLADS), serve as a signal peptide directing secretion. Sushi domains follow at residues 22 to 86 (PSCP…VCKP), 87 to 146 (VRCP…VCDN), and 149 to 206 (GHCP…ICRQ). 6 cysteine pairs are disulfide-bonded: Cys-24/Cys-64, Cys-51/Cys-84, Cys-89/Cys-131, Cys-117/Cys-144, Cys-151/Cys-191, and Cys-177/Cys-204. Asn-29 is a glycosylation site (N-linked (GlcNAc...) asparagine). N-linked (GlcNAc...) asparagine glycosylation is present at Asn-112. Positions 254-452 (NLYLLLDCSQ…KALHQVFEHM (199 aa)) constitute a VWFA domain. Residues 260–264 (DCSQS) carry the MIDAS-like motif motif. Mg(2+)-binding residues include Ser-262 and Ser-264. Residues Asn-290 and Asn-333 are each glycosylated (N-linked (GlcNAc...) asparagine). Residue Thr-337 coordinates Mg(2+). 3 disulfides stabilise this stretch: Cys-463–Cys-581, Cys-492–Cys-508, and Cys-584–Cys-600. The 281-residue stretch at 464–744 (GVGNMSANAS…MQPWLRQHLG (281 aa)) folds into the Peptidase S1 domain. N-linked (GlcNAc...) asparagine glycosylation is found at Asn-467 and Asn-471. Residues His-507 and Asp-561 each act as charge relay system in the active site. N-linked (GlcNAc...) asparagine glycans are attached at residues Asn-621 and Asn-651. 2 disulfides stabilise this stretch: Cys-638-Cys-665 and Cys-675-Cys-705. Residue Ser-679 is the Charge relay system of the active site.

Belongs to the peptidase S1 family. Serine protease component of the C3 convertase, also named C4bC2b, composed of the serine protease complement C2b and complement C4b. Serine protease component of the C5 convertase, also named C4bC2bC3b, composed of the serine protease complement C2b, complement C3b, as well as complement C4b. The cofactor is Mg(2+). Requires Mn(2+) as cofactor. In terms of processing, cleaved and activated by different proteases depending on the complement pathway to generate complement C2a and serine protease complement C2b chains. Cleaved and activated by C1S following activation by the classical complement system. Cleaved and activated by MASP2 following activation by the lectin complement system. Cleaved and activated by GZMK following activation by the GZMK complement system.

It is found in the secreted. The protein localises to the cell surface. The enzyme catalyses Selective cleavage of Arg-|-Ser bond in complement component C3 alpha-chain to form C3a and C3b, and Arg-|-Xaa bond in complement component C5 alpha-chain to form C5a and C5b.. In terms of biological role, precursor of the catalytic component of the C3 and C5 convertase complexes, which are part of the complement pathway, a cascade of proteins that leads to phagocytosis and breakdown of pathogens and signaling that strengthens the adaptive immune system. Component C2 is part of the classical, lectin and GZMK complement systems. Its function is as follows. Catalytic component of the complement C3 and C5 convertase complexes. Following complement activation, recruited to the surface of pathogens by complement C4b opsonin to form the C3 convertase, or C3b and C4b opsonins to form the C5 convertase. As part of the C3 convertase, cleaves and activate C3 into C3a anaphylatoxin and C3b opsonin, the next components of the complement pathways. As part of the C5 convertase, cleaves and activate C5 into C5a anaphylatoxin and C5b component of the membrane attack complex. The sequence is that of Complement C2 from Gorilla gorilla gorilla (Western lowland gorilla).